Reading from the N-terminus, the 1295-residue chain is Nonribosomal peptide synthetase resC (1295 aa).

The disordered stretch occupies residues 1–24 (MDLTTTSHARVDSGGVPFTSSLND). The tract at residues 221–624 (KDVVDASPQA…EGRKDTQIKL (404 aa)) is adenylation. Residues 759-836 (ESANPAEENL…DQANLLRPLV (78 aa)) form the Carrier domain. Serine 796 is subject to O-(pantetheine 4'-phosphoryl)serine. Residues 873–1284 (EDVYPCTPYQ…DEYSQTLHEL (412 aa)) form a condensation region.

The protein belongs to the NRP synthetase family. Pantetheine 4'-phosphate serves as cofactor.

The catalysed reaction is restrictinol + glycine + H(+) = restricticin + H2O. The protein operates within antifungal biosynthesis. Its function is as follows. Nonribosomal peptide synthetase; part of the gene cluster that mediates the biosynthesis of the tetrahydropyranyl antifungal agent restricticin that acts as an inhibitor of CYP51 and blocks the ergosterol biosynthesis. Within the pathway, resC catalyzes the C3 esterification of restrictinol with glycine to yield restricticin. ResC represents an example of the emerging class of single-module NRPS-like enzymes that perform esterification reactions. The highly reducing polyketide synthase resH, the short chain dehydrogenase resG, the cyclase resF, the FAD-dependent monooxygenase resA and the enoylreductase resD are required to generate the first stable intermediate desmethylrestrictinol. ResH with resD biosynthesize the first polyketide chain intermediate that is reduced by resG, followed by epoxidation by resA before 6-endo cyclization via epoxide opening by resF leads to desmethylrestrictinol. The methyltransferase resE then catalyzes the C4 O-methylation of desmethylrestrictinol to produce restrictinol, and the nonribosomal peptide synthetase resC catalyzes the C3 esterification of restrictinol with glycine that leads to restricticin. The polypeptide is Nonribosomal peptide synthetase resC (Aspergillus sclerotiorum).